Reading from the N-terminus, the 247-residue chain is Cell division protein ZapD (247 aa).

Belongs to the ZapD family. Interacts with FtsZ.

It is found in the cytoplasm. Cell division factor that enhances FtsZ-ring assembly. Directly interacts with FtsZ and promotes bundling of FtsZ protofilaments, with a reduction in FtsZ GTPase activity. This Enterobacter sp. (strain 638) protein is Cell division protein ZapD.